Consider the following 459-residue polypeptide: Phosphoglucosamine mutase (459 aa).

Ser102 serves as the catalytic Phosphoserine intermediate. Positions 102, 243, 245, and 247 each coordinate Mg(2+). Ser102 is subject to Phosphoserine.

Belongs to the phosphohexose mutase family. Mg(2+) is required as a cofactor. In terms of processing, activated by phosphorylation.

The enzyme catalyses alpha-D-glucosamine 1-phosphate = D-glucosamine 6-phosphate. Functionally, catalyzes the conversion of glucosamine-6-phosphate to glucosamine-1-phosphate. The protein is Phosphoglucosamine mutase of Bartonella quintana (strain Toulouse) (Rochalimaea quintana).